Reading from the N-terminus, the 577-residue chain is Arginine--tRNA ligase (577 aa).

The 'HIGH' region motif lies at 122-132 (PNVAKEMHVGH).

It belongs to the class-I aminoacyl-tRNA synthetase family. In terms of assembly, monomer.

Its subcellular location is the cytoplasm. It carries out the reaction tRNA(Arg) + L-arginine + ATP = L-arginyl-tRNA(Arg) + AMP + diphosphate. The sequence is that of Arginine--tRNA ligase from Escherichia coli O157:H7 (strain EC4115 / EHEC).